Here is a 416-residue protein sequence, read N- to C-terminus: Probable carboxypeptidase An18g06210 (416 aa).

The first 16 residues, 1–16 (MKSPISLLAAVGVASA), serve as a signal peptide directing secretion. 3 N-linked (GlcNAc...) asparagine glycosylation sites follow: N54, N70, and N129. Residue D142 participates in Zn(2+) binding. Catalysis depends on E174, which acts as the Proton acceptor. Zn(2+) is bound at residue E175. N187 and N319 each carry an N-linked (GlcNAc...) asparagine glycan.

This sequence belongs to the peptidase M20A family. The cofactor is Zn(2+).

It is found in the secreted. The protein is Probable carboxypeptidase An18g06210 of Aspergillus niger (strain ATCC MYA-4892 / CBS 513.88 / FGSC A1513).